A 529-amino-acid chain; its full sequence is Tyrosinase (529 aa).

Positions 1–18 are cleaved as a signal peptide; it reads MFLFAMGLLLVILQPSTG. Residues 19–476 are Lumenal, melanosome-facing; the sequence is QFPRVCANTQ…YLKQAHQIWP (458 aa). 3 N-linked (GlcNAc...) asparagine glycosylation sites follow: asparagine 86, asparagine 111, and asparagine 161. The Cu cation site is built by histidine 180, histidine 202, and histidine 211. N-linked (GlcNAc...) asparagine glycosylation is found at asparagine 230 and asparagine 290. The tract at residues 293–313 is disordered; sequence SEGPILRNPGNNDKSRTPRLP. 2 N-linked (GlcNAc...) asparagine glycosylation sites follow: asparagine 337 and asparagine 356. Cu cation-binding residues include histidine 363 and histidine 367. N-linked (GlcNAc...) asparagine glycosylation is present at asparagine 371. Position 390 (histidine 390) interacts with Cu cation. The chain crosses the membrane as a helical span at residues 477 to 497; that stretch reads WLVGAAVIGGIITAVLSGLIL. The Cytoplasmic segment spans residues 498-529; the sequence is ACRKKRKGTSPEIQPLLTESEDYNNVSYQSHF.

Belongs to the tyrosinase family. The cofactor is Cu(2+).

The protein localises to the melanosome membrane. It is found in the melanosome. It catalyses the reaction 2 L-dopa + O2 = 2 L-dopaquinone + 2 H2O. The catalysed reaction is L-tyrosine + O2 = L-dopaquinone + H2O. In terms of biological role, this is a copper-containing oxidase that functions in the formation of pigments such as melanins and other polyphenolic compounds. Catalyzes the initial and rate limiting step in the cascade of reactions leading to melanin production from tyrosine. In addition to hydroxylating tyrosine to DOPA (3,4-dihydroxyphenylalanine), also catalyzes the oxidation of DOPA to DOPA-quinone, and possibly the oxidation of DHI (5,6-dihydroxyindole) to indole-5,6 quinone. The polypeptide is Tyrosinase (TYR) (Gallus gallus (Chicken)).